The chain runs to 354 residues: Dye-decolorizing peroxidase (354 aa).

D165 serves as the catalytic Proton acceptor. H238 is a heme binding site. Residues 312 to 335 (GLFFSPTVDFLDDPPPLPAPGTPA) are targeting peptide. The span at 324–337 (DPPPLPAPGTPAAP) shows a compositional bias: pro residues. The tract at residues 324–354 (DPPPLPAPGTPAAPPARNGSLSIGSLKGTTR) is disordered. A compositionally biased stretch (polar residues) spans 342–354 (GSLSIGSLKGTTR).

This sequence belongs to the DyP-type peroxidase family. In terms of assembly, found in a complex with type 1 encapsulin, strongly suggesting it is found in a type 1 encapsulin nanocompartment. Homotetramer, presumably also in the type 1 encapsulin nanocompartment. Requires heme b as cofactor.

Its subcellular location is the encapsulin nanocompartment. The protein resides in the cell membrane. It catalyses the reaction 2 a phenolic donor + H2O2 = 2 a phenolic radical donor + 2 H2O. Its function is as follows. Cargo protein of a type 1 encapsulin nanocompartment. A heme-dependent peroxidase. This cargo-loaded encapsulin nanocompartment is probably involved in protection against oxidative damage. This Mycolicibacterium paratuberculosis (strain ATCC BAA-968 / K-10) (Mycobacterium paratuberculosis) protein is Dye-decolorizing peroxidase.